Here is a 615-residue protein sequence, read N- to C-terminus: Dihydroxy-acid dehydratase (615 aa).

Residue aspartate 81 participates in Mg(2+) binding. Cysteine 122 is a [2Fe-2S] cluster binding site. Residues aspartate 123 and lysine 124 each contribute to the Mg(2+) site. Position 124 is an N6-carboxylysine (lysine 124). Cysteine 195 serves as a coordination point for [2Fe-2S] cluster. Mg(2+) is bound at residue glutamate 491. Serine 517 functions as the Proton acceptor in the catalytic mechanism.

Belongs to the IlvD/Edd family. Homodimer. [2Fe-2S] cluster is required as a cofactor. It depends on Mg(2+) as a cofactor.

It catalyses the reaction (2R)-2,3-dihydroxy-3-methylbutanoate = 3-methyl-2-oxobutanoate + H2O. The catalysed reaction is (2R,3R)-2,3-dihydroxy-3-methylpentanoate = (S)-3-methyl-2-oxopentanoate + H2O. The protein operates within amino-acid biosynthesis; L-isoleucine biosynthesis; L-isoleucine from 2-oxobutanoate: step 3/4. It participates in amino-acid biosynthesis; L-valine biosynthesis; L-valine from pyruvate: step 3/4. Functionally, functions in the biosynthesis of branched-chain amino acids. Catalyzes the dehydration of (2R,3R)-2,3-dihydroxy-3-methylpentanoate (2,3-dihydroxy-3-methylvalerate) into 2-oxo-3-methylpentanoate (2-oxo-3-methylvalerate) and of (2R)-2,3-dihydroxy-3-methylbutanoate (2,3-dihydroxyisovalerate) into 2-oxo-3-methylbutanoate (2-oxoisovalerate), the penultimate precursor to L-isoleucine and L-valine, respectively. The chain is Dihydroxy-acid dehydratase from Shewanella pealeana (strain ATCC 700345 / ANG-SQ1).